The chain runs to 455 residues: Exodeoxyribonuclease 7 large subunit (455 aa).

The protein belongs to the XseA family. As to quaternary structure, heterooligomer composed of large and small subunits.

It localises to the cytoplasm. It carries out the reaction Exonucleolytic cleavage in either 5'- to 3'- or 3'- to 5'-direction to yield nucleoside 5'-phosphates.. Bidirectionally degrades single-stranded DNA into large acid-insoluble oligonucleotides, which are then degraded further into small acid-soluble oligonucleotides. The chain is Exodeoxyribonuclease 7 large subunit from Lactobacillus acidophilus (strain ATCC 700396 / NCK56 / N2 / NCFM).